Here is a 119-residue protein sequence, read N- to C-terminus: Beta-2-microglobulin (119 aa).

The signal sequence occupies residues 1–20 (MASSVVVALLVLLSLSGLEA). One can recognise an Ig-like C1-type domain in the interval 25–114 (PKIQVYSRHP…VTFSTPKTVK (90 aa)). A disulfide bridge links cysteine 45 with cysteine 100.

It belongs to the beta-2-microglobulin family. In terms of assembly, heterodimer of an alpha chain and a beta chain. Beta-2-microglobulin is the beta-chain of major histocompatibility complex class I molecules.

Its subcellular location is the secreted. In terms of biological role, component of the class I major histocompatibility complex (MHC). Involved in the presentation of peptide antigens to the immune system. This is Beta-2-microglobulin (B2M) from Callithrix aurita (White-eared marmoset).